The sequence spans 785 residues: uncharacterized protein (785 aa).

The segment covering 53 to 65 (KNTLTGSHGSNDL) has biased composition (polar residues). The tract at residues 53–162 (KNTLTGSHGS…RKAADEQGPI (110 aa)) is disordered. Acidic residues predominate over residues 66–79 (ATDESLDSPEDEEA). A compositionally biased stretch (polar residues) spans 81 to 94 (SPLQLGTPTSTTSG). Ser215 is subject to Phosphoserine. Disordered regions lie at residues 571–590 (KVVD…TSVN) and 631–657 (DSSG…RIQF). The span at 575 to 584 (SDDEESDSDE) shows a compositional bias: acidic residues. Ser667 is subject to Phosphoserine. The interval 693-785 (DPKMKFTSHP…FGSIFKKVFG (93 aa)) is disordered. Residues 725 to 739 (RKAHHHHHHHNHVSR) show a composition bias toward basic residues. Residues 776–785 (FGSIFKKVFG) show a composition bias toward low complexity.

This is an uncharacterized protein from Saccharomyces cerevisiae (strain ATCC 204508 / S288c) (Baker's yeast).